Here is a 179-residue protein sequence, read N- to C-terminus: Large ribosomal subunit protein uL5 (179 aa).

It belongs to the universal ribosomal protein uL5 family. In terms of assembly, part of the 50S ribosomal subunit; part of the 5S rRNA/L5/L18/L25 subcomplex. Contacts the 5S rRNA and the P site tRNA. Forms a bridge to the 30S subunit in the 70S ribosome.

In terms of biological role, this is one of the proteins that bind and probably mediate the attachment of the 5S RNA into the large ribosomal subunit, where it forms part of the central protuberance. In the 70S ribosome it contacts protein S13 of the 30S subunit (bridge B1b), connecting the 2 subunits; this bridge is implicated in subunit movement. Contacts the P site tRNA; the 5S rRNA and some of its associated proteins might help stabilize positioning of ribosome-bound tRNAs. The sequence is that of Large ribosomal subunit protein uL5 from Francisella tularensis subsp. mediasiatica (strain FSC147).